The following is a 437-amino-acid chain: Serine hydroxymethyltransferase 2 (437 aa).

(6S)-5,6,7,8-tetrahydrofolate-binding positions include L125 and 129-131 (GHL). K234 is subject to N6-(pyridoxal phosphate)lysine.

This sequence belongs to the SHMT family. Homodimer. Pyridoxal 5'-phosphate is required as a cofactor.

The protein resides in the cytoplasm. It catalyses the reaction (6R)-5,10-methylene-5,6,7,8-tetrahydrofolate + glycine + H2O = (6S)-5,6,7,8-tetrahydrofolate + L-serine. The protein operates within one-carbon metabolism; tetrahydrofolate interconversion. It participates in amino-acid biosynthesis; glycine biosynthesis; glycine from L-serine: step 1/1. Functionally, catalyzes the reversible interconversion of serine and glycine with tetrahydrofolate (THF) serving as the one-carbon carrier. This reaction serves as the major source of one-carbon groups required for the biosynthesis of purines, thymidylate, methionine, and other important biomolecules. Also exhibits THF-independent aldolase activity toward beta-hydroxyamino acids, producing glycine and aldehydes, via a retro-aldol mechanism. In Mesorhizobium japonicum (strain LMG 29417 / CECT 9101 / MAFF 303099) (Mesorhizobium loti (strain MAFF 303099)), this protein is Serine hydroxymethyltransferase 2.